Consider the following 491-residue polypeptide: Glutamate--tRNA ligase (491 aa).

The 'HIGH' region signature appears at 9 to 19 (PSPTGTPHVGL). Residues 253–257 (KLSKR) carry the 'KMSKS' region motif. ATP is bound at residue K256.

The protein belongs to the class-I aminoacyl-tRNA synthetase family. Glutamate--tRNA ligase type 1 subfamily. Monomer.

Its subcellular location is the cytoplasm. The enzyme catalyses tRNA(Glu) + L-glutamate + ATP = L-glutamyl-tRNA(Glu) + AMP + diphosphate. Catalyzes the attachment of glutamate to tRNA(Glu) in a two-step reaction: glutamate is first activated by ATP to form Glu-AMP and then transferred to the acceptor end of tRNA(Glu). The chain is Glutamate--tRNA ligase from Mycolicibacterium gilvum (strain PYR-GCK) (Mycobacterium gilvum (strain PYR-GCK)).